The chain runs to 459 residues: uncharacterized protein (459 aa).

A run of 12 helical transmembrane segments spans residues serine 25 to leucine 45, alanine 52 to isoleucine 72, proline 95 to proline 115, leucine 123 to proline 143, isoleucine 167 to phenylalanine 187, valine 192 to cysteine 212, valine 249 to phenylalanine 269, leucine 279 to proline 299, threonine 310 to serine 330, valine 332 to isoleucine 352, serine 389 to valine 409, and alanine 420 to leucine 440.

This sequence belongs to the sodium:galactoside symporter (TC 2.A.2) family.

It is found in the cell membrane. This is an uncharacterized protein from Bacillus subtilis (strain 168).